We begin with the raw amino-acid sequence, 213 residues long: Phosphate-specific transport system accessory protein PhoU homolog 2 (213 aa).

This sequence belongs to the PhoU family. As to quaternary structure, homodimer.

It is found in the cytoplasm. In terms of biological role, plays a role in the regulation of phosphate uptake. In this role, it may bind, possibly as a chaperone, to PhoR, PhoP or a PhoR-PhoP complex to promote dephosphorylation of phospho-PhoP, or inhibit formation of the PhoR-PhoP transitory complex. This chain is Phosphate-specific transport system accessory protein PhoU homolog 2 (phoU2), found in Mycobacterium bovis (strain ATCC BAA-935 / AF2122/97).